The chain runs to 347 residues: NADH-ubiquinone oxidoreductase chain 2 (347 aa).

10 consecutive transmembrane segments (helical) span residues M1–A21, H25–M45, Y59–V79, F111–L131, I149–G169, I178–P198, T201–L221, M237–L257, N274–M294, and L326–L346.

It belongs to the complex I subunit 2 family. As to quaternary structure, core subunit of respiratory chain NADH dehydrogenase (Complex I) which is composed of 45 different subunits. Interacts with TMEM242.

Its subcellular location is the mitochondrion inner membrane. It carries out the reaction a ubiquinone + NADH + 5 H(+)(in) = a ubiquinol + NAD(+) + 4 H(+)(out). Its function is as follows. Core subunit of the mitochondrial membrane respiratory chain NADH dehydrogenase (Complex I) which catalyzes electron transfer from NADH through the respiratory chain, using ubiquinone as an electron acceptor. Essential for the catalytic activity and assembly of complex I. The sequence is that of NADH-ubiquinone oxidoreductase chain 2 from Pteropus rodricensis (Rodriguez flying fox).